Reading from the N-terminus, the 250-residue chain is Ribonuclease 3 (250 aa).

Residues 1 to 15 show a composition bias toward basic residues; that stretch reads MTKTPAKKKRARSSK. The tract at residues 1 to 21 is disordered; that stretch reads MTKTPAKKKRARSSKAKGTDA. In terms of domain architecture, RNase III spans 22–150; that stretch reads NAALEARIGH…VIGAIFLDGG (129 aa). Glutamate 63 is a Mg(2+) binding site. The active site involves aspartate 67. Mg(2+) is bound by residues aspartate 136 and glutamate 139. Residue glutamate 139 is part of the active site. Residues 175–244 form the DRBM domain; sequence DPKTVLQEWA…ASVMIEREGV (70 aa).

This sequence belongs to the ribonuclease III family. As to quaternary structure, homodimer. It depends on Mg(2+) as a cofactor.

It is found in the cytoplasm. It carries out the reaction Endonucleolytic cleavage to 5'-phosphomonoester.. Digests double-stranded RNA. Involved in the processing of primary rRNA transcript to yield the immediate precursors to the large and small rRNAs (23S and 16S). Processes some mRNAs, and tRNAs when they are encoded in the rRNA operon. Processes pre-crRNA and tracrRNA of type II CRISPR loci if present in the organism. The sequence is that of Ribonuclease 3 from Bradyrhizobium diazoefficiens (strain JCM 10833 / BCRC 13528 / IAM 13628 / NBRC 14792 / USDA 110).